The chain runs to 326 residues: Isopenicillin N synthase (326 aa).

Residues Arg-84, Tyr-88, and Tyr-186 each contribute to the isopenicillin N site. N-[(5S)-5-amino-5-carboxypentanoyl]-L-cysteinyl-D-valine is bound by residues Arg-84, Tyr-88, Tyr-186, His-209, and Asp-211. The Fe2OG dioxygenase domain maps to 183–283 (LIRYPFLENY…RLSIPFFANL (101 aa)). Fe(2+)-binding residues include His-209, Asp-211, and His-265. Residue Arg-274 coordinates 2-oxoglutarate. Ser-276 provides a ligand contact to isopenicillin N. Ser-276 lines the N-[(5S)-5-amino-5-carboxypentanoyl]-L-cysteinyl-D-valine pocket.

It belongs to the iron/ascorbate-dependent oxidoreductase family. Requires Fe cation as cofactor. L-ascorbate is required as a cofactor.

The catalysed reaction is N-[(5S)-5-amino-5-carboxypentanoyl]-L-cysteinyl-D-valine + O2 = isopenicillin N + 2 H2O. It functions in the pathway antibiotic biosynthesis; penicillin G biosynthesis; penicillin G from L-alpha-aminoadipate and L-cysteine and L-valine: step 2/3. In terms of biological role, removes, in the presence of oxygen, 4 hydrogen atoms from delta-L-(alpha-aminoadipyl)-L-cysteinyl-D-valine (ACV) to form the azetidinone and thiazolidine rings of isopenicillin. This Lysobacter lactamgenus protein is Isopenicillin N synthase (pcbC).